A 197-amino-acid polypeptide reads, in one-letter code: Protocatechuate 3,4-dioxygenase alpha chain (197 aa).

Residue arginine 130 participates in 3,4-dihydroxybenzoate binding.

Belongs to the intradiol ring-cleavage dioxygenase family. The enzyme is an oligomer of 12 copies of the alpha and beta chains. Requires Fe(3+) as cofactor.

It carries out the reaction 3,4-dihydroxybenzoate + O2 = 3-carboxy-cis,cis-muconate + 2 H(+). Its pathway is aromatic compound metabolism; beta-ketoadipate pathway; 3-carboxy-cis,cis-muconate from 3,4-dihydroxybenzoate: step 1/1. In terms of biological role, plays an essential role in the utilization of numerous aromatic and hydroaromatic compounds via the beta-ketoadipate pathway. The protein is Protocatechuate 3,4-dioxygenase alpha chain (pcaG) of Burkholderia cepacia (Pseudomonas cepacia).